We begin with the raw amino-acid sequence, 265 residues long: Probable enoyl-CoA hydratase 1, peroxisomal (265 aa).

The residue at position 1 (methionine 1) is an N-acetylmethionine. Substrate contacts are provided by residues 68 to 72 (SGVDL) and alanine 112. The short motif at 263–265 (SKL) is the Microbody targeting signal element.

Belongs to the enoyl-CoA hydratase/isomerase family.

The protein resides in the peroxisome. It catalyses the reaction a (3S)-3-hydroxyacyl-CoA = a (2E)-enoyl-CoA + H2O. The enzyme catalyses a 4-saturated-(3S)-3-hydroxyacyl-CoA = a (3E)-enoyl-CoA + H2O. Its pathway is lipid metabolism; fatty acid beta-oxidation. In terms of biological role, straight-chain enoyl-CoA thioesters from C4 up to at least C16 are processed, although with decreasing catalytic rate. The polypeptide is Probable enoyl-CoA hydratase 1, peroxisomal (Arabidopsis thaliana (Mouse-ear cress)).